A 542-amino-acid chain; its full sequence is CTP synthase (542 aa).

The tract at residues 1 to 265 is amidoligase domain; that stretch reads MTRFIFITGG…DTQVLKFFGM (265 aa). S13 is a binding site for CTP. S13 lines the UTP pocket. 14-19 lines the ATP pocket; that stretch reads SLGKGL. L-glutamine is bound at residue Y54. D71 is an ATP binding site. 2 residues coordinate Mg(2+): D71 and E139. CTP-binding positions include 146–148, 186–191, and K222; these read DIE and KTKPTQ. UTP-binding positions include 186-191 and K222; that span reads KTKPTQ. Residues 291–541 enclose the Glutamine amidotransferase type-1 domain; sequence TIAVVGKYTS…IRAAIEQSRL (251 aa). Position 353 (G353) interacts with L-glutamine. C380 (nucleophile; for glutamine hydrolysis) is an active-site residue. Residues 381 to 384, E404, and R469 each bind L-glutamine; that span reads FGMQ. Active-site residues include H514 and E516.

The protein belongs to the CTP synthase family. In terms of assembly, homotetramer.

It catalyses the reaction UTP + L-glutamine + ATP + H2O = CTP + L-glutamate + ADP + phosphate + 2 H(+). The enzyme catalyses L-glutamine + H2O = L-glutamate + NH4(+). It carries out the reaction UTP + NH4(+) + ATP = CTP + ADP + phosphate + 2 H(+). It functions in the pathway pyrimidine metabolism; CTP biosynthesis via de novo pathway; CTP from UDP: step 2/2. With respect to regulation, allosterically activated by GTP, when glutamine is the substrate; GTP has no effect on the reaction when ammonia is the substrate. The allosteric effector GTP functions by stabilizing the protein conformation that binds the tetrahedral intermediate(s) formed during glutamine hydrolysis. Inhibited by the product CTP, via allosteric rather than competitive inhibition. Functionally, catalyzes the ATP-dependent amination of UTP to CTP with either L-glutamine or ammonia as the source of nitrogen. Regulates intracellular CTP levels through interactions with the four ribonucleotide triphosphates. The protein is CTP synthase of Rhodospirillum centenum (strain ATCC 51521 / SW).